Here is a 319-residue protein sequence, read N- to C-terminus: MSLNFLEFEKPIAELEAKIEALRDVSRHGGDSAIDLDKEIEQLEKKSLELKKKIFSDLGAWETAQLARHPLRPYTLDYVQHVFEEFDELAGDRAFADDKAIVGGIARLEGRPVMIIGHQKGRETKEKVRRNFGMPKPEGYRKALRLMEMAERFNMPIITFIDTAGAYPGVGAEERGQSEAIAKNLKVMSGLKVPVICNVVGEGGSGGALAIGVGDYVNMLQYSTYSVISPEGCASILWRDSDKAPQAAEAMGLTAPRLKELELIDEIIEEPLGGAHRDHVKMAENMKATLLRQLEDLEQLDEESLRERRYQRLMNYGYC.

Residues 35-296 (DLDKEIEQLE…KATLLRQLED (262 aa)) form the CoA carboxyltransferase C-terminal domain.

This sequence belongs to the AccA family. Acetyl-CoA carboxylase is a heterohexamer composed of biotin carboxyl carrier protein (AccB), biotin carboxylase (AccC) and two subunits each of ACCase subunit alpha (AccA) and ACCase subunit beta (AccD).

The protein resides in the cytoplasm. It carries out the reaction N(6)-carboxybiotinyl-L-lysyl-[protein] + acetyl-CoA = N(6)-biotinyl-L-lysyl-[protein] + malonyl-CoA. Its pathway is lipid metabolism; malonyl-CoA biosynthesis; malonyl-CoA from acetyl-CoA: step 1/1. Component of the acetyl coenzyme A carboxylase (ACC) complex. First, biotin carboxylase catalyzes the carboxylation of biotin on its carrier protein (BCCP) and then the CO(2) group is transferred by the carboxyltransferase to acetyl-CoA to form malonyl-CoA. This Vibrio parahaemolyticus serotype O3:K6 (strain RIMD 2210633) protein is Acetyl-coenzyme A carboxylase carboxyl transferase subunit alpha.